The primary structure comprises 921 residues: Isoleucine--tRNA ligase (921 aa).

A 'HIGH' region motif is present at residues 57 to 67; sequence PYANGDIHMGH. Glu552 provides a ligand contact to L-isoleucyl-5'-AMP. The short motif at 593-597 is the 'KMSKS' region element; it reads KMSKS. Lys596 provides a ligand contact to ATP. Residues Cys888, Cys891, Cys908, and Cys911 each coordinate Zn(2+).

The protein belongs to the class-I aminoacyl-tRNA synthetase family. IleS type 1 subfamily. As to quaternary structure, monomer. Zn(2+) serves as cofactor.

It is found in the cytoplasm. It carries out the reaction tRNA(Ile) + L-isoleucine + ATP = L-isoleucyl-tRNA(Ile) + AMP + diphosphate. Its function is as follows. Catalyzes the attachment of isoleucine to tRNA(Ile). As IleRS can inadvertently accommodate and process structurally similar amino acids such as valine, to avoid such errors it has two additional distinct tRNA(Ile)-dependent editing activities. One activity is designated as 'pretransfer' editing and involves the hydrolysis of activated Val-AMP. The other activity is designated 'posttransfer' editing and involves deacylation of mischarged Val-tRNA(Ile). The polypeptide is Isoleucine--tRNA ligase (Bacillus cereus (strain AH187)).